A 248-amino-acid chain; its full sequence is Putative transposase YncI (248 aa).

This sequence belongs to the transposase 11 family.

The protein is Putative transposase YncI (yncI) of Escherichia coli (strain K12).